Here is a 1153-residue protein sequence, read N- to C-terminus: Otoancorin (1153 aa).

The first 22 residues, 1-22, serve as a signal peptide directing secretion; that stretch reads MSQEPTTYSLFLFLFLSHGVSS. N156 carries N-linked (GlcNAc...) asparagine glycosylation. N211 is a glycosylation site (N-linked (GlcNAc...) (complex) asparagine). N-linked (GlcNAc...) asparagine glycans are attached at residues N244, N289, N321, N394, N398, N460, N544, N812, N911, and N974. Residues 1109–1128 form a disordered region; the sequence is HSWQDAPASAGPTRTSSSRS. A1130 carries the GPI-anchor amidated alanine lipid modification. The propeptide at 1131-1153 is removed in mature form; it reads GALQSWGLWLGCPLLVLMAKLLW.

It belongs to the stereocilin family.

It is found in the apical cell membrane. The protein resides in the secreted. Its subcellular location is the extracellular space. The protein localises to the extracellular matrix. In terms of biological role, may act as an adhesion molecule. The chain is Otoancorin (OTOA) from Homo sapiens (Human).